A 292-amino-acid chain; its full sequence is NAD kinase (292 aa).

Asp73 serves as the catalytic Proton acceptor. Residues 73–74, 147–148, His158, Arg175, Asp177, 188–193, and Gln247 each bind NAD(+); these read DG, NE, and TAYSLS.

Belongs to the NAD kinase family. A divalent metal cation serves as cofactor.

It localises to the cytoplasm. The catalysed reaction is NAD(+) + ATP = ADP + NADP(+) + H(+). Involved in the regulation of the intracellular balance of NAD and NADP, and is a key enzyme in the biosynthesis of NADP. Catalyzes specifically the phosphorylation on 2'-hydroxyl of the adenosine moiety of NAD to yield NADP. The protein is NAD kinase of Enterobacter sp. (strain 638).